A 113-amino-acid chain; its full sequence is PTS system fructose-like EIIB component 3 (113 aa).

The PTS EIIB type-2 domain maps to 1 to 100 (MAYLVAVTAC…PQRVMSAVRK (100 aa)). Cys10 serves as the catalytic Phosphocysteine intermediate. At Cys10 the chain carries Phosphocysteine; by EIIA.

The protein localises to the cytoplasm. It catalyses the reaction D-fructose(out) + N(pros)-phospho-L-histidyl-[protein] = D-fructose 1-phosphate(in) + L-histidyl-[protein]. Functionally, the phosphoenolpyruvate-dependent sugar phosphotransferase system (sugar PTS), a major carbohydrate active transport system, catalyzes the phosphorylation of incoming sugar substrates concomitantly with their translocation across the cell membrane. In Escherichia coli (strain K12), this protein is PTS system fructose-like EIIB component 3 (frwD).